Consider the following 140-residue polypeptide: Large-conductance mechanosensitive channel (140 aa).

Transmembrane regions (helical) follow at residues 14–34, 37–57, and 66–86; these read VLDL…VKSL, YLIN…DWVL, and FGSF…VFIL.

It belongs to the MscL family. Homopentamer.

It is found in the cell membrane. Channel that opens in response to stretch forces in the membrane lipid bilayer. May participate in the regulation of osmotic pressure changes within the cell. The protein is Large-conductance mechanosensitive channel of Pediococcus pentosaceus (strain ATCC 25745 / CCUG 21536 / LMG 10740 / 183-1w).